Reading from the N-terminus, the 72-residue chain is Protein kish-A (72 aa).

The N-terminal stretch at 1-26 is a signal peptide; the sequence is MSAIFNFQSLLTVILLLICTCAYIRS. Over 27 to 53 the chain is Extracellular; that stretch reads LAPSLLDKNKTGLLGIFWKCARIGERK. N-linked (GlcNAc...) asparagine glycosylation is present at Asn35. A helical membrane pass occupies residues 54 to 71; the sequence is SPYVAVCCVVMAFSILFV. Gln72 is a topological domain (cytoplasmic).

It belongs to the KISH family.

Its subcellular location is the golgi apparatus membrane. Involved in the early part of the secretory pathway. This is Protein kish-A (TMEM167A) from Gallus gallus (Chicken).